The chain runs to 347 residues: MSGLLCYCRQGFEPELAAELSARAAFVGIAGYARTQRNDGYVLFVCDEAAQLAAKLQWRELIFARQKLVVIAELKGIDPKDRITPILAALEGQQRFGDLWVEHPDSDAGKPLASLARSFGNALRPALRKAGLLTDKPQPRQPRLHICFLDGDHALLAVADSADSAPWPLGIPRLKLLPEAPSRSALKLDEALLTLLTPEEREALVKPGMRAADLGAAPGGWTWVLTRQHVHVTSVDNGPLRAHVLETGLVEHLRADGFHWKPAQPLDWMVCDMVEQPRRVAERMATWVREGWCRNTIFNLKLPMKKRWDETRLCLELFEQQAEKSLIVRAKQLYHDREEITVLAMRG.

S-adenosyl-L-methionine is bound by residues S184, A217–G220, D236, D256, and D272. K301 serves as the catalytic Proton acceptor.

It belongs to the class I-like SAM-binding methyltransferase superfamily. RNA methyltransferase RlmE family. RlmM subfamily. As to quaternary structure, monomer.

It localises to the cytoplasm. It catalyses the reaction cytidine(2498) in 23S rRNA + S-adenosyl-L-methionine = 2'-O-methylcytidine(2498) in 23S rRNA + S-adenosyl-L-homocysteine + H(+). Its function is as follows. Catalyzes the 2'-O-methylation at nucleotide C2498 in 23S rRNA. The protein is Ribosomal RNA large subunit methyltransferase M of Xanthomonas oryzae pv. oryzae (strain MAFF 311018).